The following is a 119-amino-acid chain: Beta-2-microglobulin (119 aa).

A signal peptide spans 1–20 (MARFVVVALLVLLSLSGLEA). The Ig-like C1-type domain occupies 25–114 (PKIQVYSRHP…VTLSTPKTVK (90 aa)). A disulfide bond links cysteine 45 and cysteine 100.

It belongs to the beta-2-microglobulin family. In terms of assembly, heterodimer of an alpha chain and a beta chain. Beta-2-microglobulin is the beta-chain of major histocompatibility complex class I molecules.

The protein resides in the secreted. Component of the class I major histocompatibility complex (MHC). Involved in the presentation of peptide antigens to the immune system. The polypeptide is Beta-2-microglobulin (B2M) (Aotus azarae (Azara's night monkey)).